We begin with the raw amino-acid sequence, 170 residues long: 3-hydroxydecanoyl-[acyl-carrier-protein] dehydratase (170 aa).

The active site involves His69.

The protein belongs to the thioester dehydratase family. FabA subfamily. In terms of assembly, homodimer.

Its subcellular location is the cytoplasm. It carries out the reaction a (3R)-hydroxyacyl-[ACP] = a (2E)-enoyl-[ACP] + H2O. It catalyses the reaction (3R)-hydroxydecanoyl-[ACP] = (2E)-decenoyl-[ACP] + H2O. The catalysed reaction is (2E)-decenoyl-[ACP] = (3Z)-decenoyl-[ACP]. The protein operates within lipid metabolism; fatty acid biosynthesis. In terms of biological role, necessary for the introduction of cis unsaturation into fatty acids. Catalyzes the dehydration of (3R)-3-hydroxydecanoyl-ACP to E-(2)-decenoyl-ACP and then its isomerization to Z-(3)-decenoyl-ACP. Can catalyze the dehydratase reaction for beta-hydroxyacyl-ACPs with saturated chain lengths up to 16:0, being most active on intermediate chain length. The sequence is that of 3-hydroxydecanoyl-[acyl-carrier-protein] dehydratase from Idiomarina loihiensis (strain ATCC BAA-735 / DSM 15497 / L2-TR).